The following is a 244-amino-acid chain: tRNA (guanine-N(7)-)-methyltransferase (244 aa).

Residues 1–10 (MSDTPQSPAQ) show a composition bias toward polar residues. A disordered region spans residues 1–20 (MSDTPQSPAQGSLAEHDEAR). E74, E99, D126, and D149 together coordinate S-adenosyl-L-methionine. D149 is an active-site residue. Substrate contacts are provided by residues K153, D185, and 222–225 (TKFE).

Belongs to the class I-like SAM-binding methyltransferase superfamily. TrmB family.

It catalyses the reaction guanosine(46) in tRNA + S-adenosyl-L-methionine = N(7)-methylguanosine(46) in tRNA + S-adenosyl-L-homocysteine. The protein operates within tRNA modification; N(7)-methylguanine-tRNA biosynthesis. Catalyzes the formation of N(7)-methylguanine at position 46 (m7G46) in tRNA. The polypeptide is tRNA (guanine-N(7)-)-methyltransferase (Pseudomonas aeruginosa (strain UCBPP-PA14)).